A 273-amino-acid chain; its full sequence is Secretory carrier-associated membrane protein 6 (273 aa).

A disordered region spans residues 1–69 (MHHDPNPFDE…MGDSKSKARE (69 aa)). The Cytoplasmic segment spans residues 1–131 (MHHDPNPFDE…LQKLQYLAFA (131 aa)). Residues 20–30 (NGGGGGGGGGS) are compositionally biased toward gly residues. The stretch at 68 to 94 (RELSSWETDLKRREADIKRREEALRNA) forms a coiled coil. 4 helical membrane passes run 132–152 (SWLG…VCWI), 159–179 (LFFL…LIWY), 194–214 (FGWF…AAIA), and 239–259 (IIGI…LLSI). The Cytoplasmic portion of the chain corresponds to 260-273 (GVLQRVYMYFRGNK).

This sequence belongs to the SCAMP family.

The protein resides in the cell membrane. Its subcellular location is the cytoplasmic vesicle. The protein localises to the secretory vesicle membrane. In terms of biological role, probably involved in membrane trafficking. The sequence is that of Secretory carrier-associated membrane protein 6 (SCAMP6) from Oryza sativa subsp. japonica (Rice).